Here is a 765-residue protein sequence, read N- to C-terminus: Protein transport protein Sec23A (765 aa).

4 residues coordinate Zn(2+): Cys-61, Cys-66, Cys-85, and Cys-88. A Gelsolin-like repeat occupies 632–718 (PEPVLLDSSS…EHGGSQARFL (87 aa)).

The protein belongs to the SEC23/SEC24 family. SEC23 subfamily. In terms of assembly, COPII is composed of at least five proteins: the Sec23/24 complex, the Sec13/31 complex and Sar1.

It is found in the cytoplasmic vesicle. Its subcellular location is the COPII-coated vesicle membrane. The protein resides in the endoplasmic reticulum membrane. The protein localises to the cytoplasm. It localises to the cytosol. Functionally, component of the coat protein complex II (COPII) which promotes the formation of transport vesicles from the endoplasmic reticulum (ER). The coat has two main functions, the physical deformation of the endoplasmic reticulum membrane into vesicles and the selection of cargo molecules for their transport to the Golgi complex. The sequence is that of Protein transport protein Sec23A from Xenopus tropicalis (Western clawed frog).